Consider the following 905-residue polypeptide: DNA gyrase subunit A (905 aa).

The Topo IIA-type catalytic domain maps to 35-524 (IPDVRDGLKP…GEFDQDIEDL (490 aa)). Catalysis depends on Tyr123, which acts as the O-(5'-phospho-DNA)-tyrosine intermediate. Positions 551–557 (QKRGGKG) match the GyrA-box motif.

This sequence belongs to the type II topoisomerase GyrA/ParC subunit family. As to quaternary structure, heterotetramer, composed of two GyrA and two GyrB chains. In the heterotetramer, GyrA contains the active site tyrosine that forms a transient covalent intermediate with DNA, while GyrB binds cofactors and catalyzes ATP hydrolysis.

The protein resides in the cytoplasm. The catalysed reaction is ATP-dependent breakage, passage and rejoining of double-stranded DNA.. A type II topoisomerase that negatively supercoils closed circular double-stranded (ds) DNA in an ATP-dependent manner to modulate DNA topology and maintain chromosomes in an underwound state. Negative supercoiling favors strand separation, and DNA replication, transcription, recombination and repair, all of which involve strand separation. Also able to catalyze the interconversion of other topological isomers of dsDNA rings, including catenanes and knotted rings. Type II topoisomerases break and join 2 DNA strands simultaneously in an ATP-dependent manner. This chain is DNA gyrase subunit A, found in Rickettsia typhi (strain ATCC VR-144 / Wilmington).